The sequence spans 254 residues: 5-oxoprolinase subunit A (254 aa).

This sequence belongs to the LamB/PxpA family. Forms a complex composed of PxpA, PxpB and PxpC.

The enzyme catalyses 5-oxo-L-proline + ATP + 2 H2O = L-glutamate + ADP + phosphate + H(+). Functionally, catalyzes the cleavage of 5-oxoproline to form L-glutamate coupled to the hydrolysis of ATP to ADP and inorganic phosphate. This is 5-oxoprolinase subunit A from Rhodopseudomonas palustris (strain ATCC BAA-98 / CGA009).